An 83-amino-acid chain; its full sequence is Exodeoxyribonuclease 7 small subunit (83 aa).

It belongs to the XseB family. In terms of assembly, heterooligomer composed of large and small subunits.

It is found in the cytoplasm. The enzyme catalyses Exonucleolytic cleavage in either 5'- to 3'- or 3'- to 5'-direction to yield nucleoside 5'-phosphates.. Its function is as follows. Bidirectionally degrades single-stranded DNA into large acid-insoluble oligonucleotides, which are then degraded further into small acid-soluble oligonucleotides. In Rhizobium rhizogenes (strain K84 / ATCC BAA-868) (Agrobacterium radiobacter), this protein is Exodeoxyribonuclease 7 small subunit.